Here is a 173-residue protein sequence, read N- to C-terminus: Translation initiation factor IF-3 (173 aa).

It belongs to the IF-3 family. As to quaternary structure, monomer.

The protein localises to the cytoplasm. Its function is as follows. IF-3 binds to the 30S ribosomal subunit and shifts the equilibrium between 70S ribosomes and their 50S and 30S subunits in favor of the free subunits, thus enhancing the availability of 30S subunits on which protein synthesis initiation begins. This Ehrlichia ruminantium (strain Gardel) protein is Translation initiation factor IF-3.